The primary structure comprises 242 residues: MQDPNEDTEWNEILRDFGILPPKEEPKDEIEEMVLRLQKEAMVKPYEKMTLAELKEAEDEFDDEDMKAIEIYREKRLQEWKALKKKQKFGELREISGNQYVNEVTNAEKDVWVIIHLYRSSIPLCLLVNQHLSLLARKFPETKFVKAIANSCIEHYHDNCLPTIFVYKNGQIEGKFIGIIECGGINLKLEELEWKLAEVGAIQTDLEENPKKAIVDVMVSSIRNTSIYGDSDSSNSDSEDTK.

The region spanning 34 to 201 (VLRLQKEAMV…LEWKLAEVGA (168 aa)) is the Phosducin domain. The thioredoxin fold stretch occupies residues 89-242 (FGELREISGN…SSNSDSEDTK (154 aa)).

Belongs to the phosducin family. In terms of assembly, interacts with the CCT chaperonin complex and actin.

It localises to the endoplasmic reticulum. Its function is as follows. Essential for male fertility, spermiogenesis and acrosome formation. The polypeptide is Phosducin-like protein 2 (PDCL2) (Bos taurus (Bovine)).